A 208-amino-acid chain; its full sequence is Glycerol-3-phosphate acyltransferase (208 aa).

The next 5 helical transmembrane spans lie at 4 to 24 (LALS…AVLI), 56 to 76 (VAVL…GYFL), 80 to 100 (PFML…PIFF), 117 to 137 (PIGL…VVLF), and 139 to 159 (YSSL…WLIK).

It belongs to the PlsY family. In terms of assembly, probably interacts with PlsX.

It localises to the cell inner membrane. It carries out the reaction an acyl phosphate + sn-glycerol 3-phosphate = a 1-acyl-sn-glycero-3-phosphate + phosphate. Its pathway is lipid metabolism; phospholipid metabolism. In terms of biological role, catalyzes the transfer of an acyl group from acyl-phosphate (acyl-PO(4)) to glycerol-3-phosphate (G3P) to form lysophosphatidic acid (LPA). This enzyme utilizes acyl-phosphate as fatty acyl donor, but not acyl-CoA or acyl-ACP. The sequence is that of Glycerol-3-phosphate acyltransferase from Vibrio cholerae serotype O1 (strain ATCC 39541 / Classical Ogawa 395 / O395).